The following is a 555-amino-acid chain: Glutamate--tRNA ligase (555 aa).

A 'HIGH' region motif is present at residues 100 to 110 (PNPSGPLHIGH).

This sequence belongs to the class-I aminoacyl-tRNA synthetase family. Glutamate--tRNA ligase type 2 subfamily.

The protein resides in the cytoplasm. The catalysed reaction is tRNA(Glu) + L-glutamate + ATP = L-glutamyl-tRNA(Glu) + AMP + diphosphate. In terms of biological role, catalyzes the attachment of glutamate to tRNA(Glu) in a two-step reaction: glutamate is first activated by ATP to form Glu-AMP and then transferred to the acceptor end of tRNA(Glu). In Methanococcus maripaludis (strain C5 / ATCC BAA-1333), this protein is Glutamate--tRNA ligase.